A 566-amino-acid polypeptide reads, in one-letter code: Glucose starvation modulator protein 1 (566 aa).

Residues 20–48 constitute a DNA-binding region (zn(2)-C6 fungal-type); that stretch reads CVFCHQKHLQCSNERPCKNCVKRNIAHGC. Disordered stretches follow at residues 63-92 and 250-270; these read GVPGAVSNKQSTPRKKLKTSPVSTSVSPMD and KQASPSPSNTSTSENNTNTLS. Residues 253-270 are compositionally biased toward low complexity; the sequence is SPSPSNTSTSENNTNTLS.

It belongs to the ERT1/acuK family.

It is found in the nucleus. Transcription factor which regulates nonfermentable carbon utilization. The protein is Glucose starvation modulator protein 1 (GSM1) of Candida albicans (strain WO-1) (Yeast).